The primary structure comprises 246 residues: Endonuclease V (246 aa).

The Mg(2+) site is built by Asp50 and Asp120.

Belongs to the endonuclease V family. Requires Mg(2+) as cofactor.

It is found in the cytoplasm. It catalyses the reaction Endonucleolytic cleavage at apurinic or apyrimidinic sites to products with a 5'-phosphate.. In terms of biological role, DNA repair enzyme involved in the repair of deaminated bases. Selectively cleaves double-stranded DNA at the second phosphodiester bond 3' to a deoxyinosine leaving behind the intact lesion on the nicked DNA. The sequence is that of Endonuclease V from Gloeobacter violaceus (strain ATCC 29082 / PCC 7421).